Reading from the N-terminus, the 808-residue chain is DNA replication licensing factor MCM3 (808 aa).

Ala-2 bears the N-acetylalanine mark. A phosphoserine mark is found at Ser-160 and Ser-275. Lys-293 is modified (N6-acetyllysine). The MCM domain occupies 295–502 (IFDQLARSLA…QDREISDHVL (208 aa)). Residues Gln-353, Leu-393, Glu-394, Ala-395, and Ala-397 each coordinate ADP. Positions 477–480 (SRFD) match the Arginine finger motif. Residue Ala-523 coordinates ATP. Ser-535 is modified (phosphoserine; by ATM). Residue Lys-547 is modified to N6-acetyllysine. Residue Ser-611 is modified to Phosphoserine. Residues 662–739 (KKRKKRSEDE…ETKESQKVEL (78 aa)) form a disordered region. Arg-664 serves as a coordination point for ATP. 3 positions are modified to phosphoserine: Ser-668, Ser-672, and Ser-681. Residues 679–688 (EKSQEDQEQK) show a composition bias toward basic and acidic residues. A Phosphotyrosine modification is found at Tyr-708. Phosphothreonine occurs at positions 713 and 722. The span at 727–739 (DSQETKESQKVEL) shows a compositional bias: basic and acidic residues. Residues Ser-728 and Ser-734 each carry the phosphoserine modification.

This sequence belongs to the MCM family. In terms of assembly, component of the MCM2-7 complex. The complex forms a toroidal hexameric ring with the proposed subunit order MCM2-MCM6-MCM4-MCM7-MCM3-MCM5. Component of the CMG helicase complex, a hexameric ring of related MCM2-7 subunits stabilized by CDC45 and the tetrameric GINS complex. Associated with the replication-specific DNA polymerase alpha. Interacts with MCMBP. Interacts with ANKRD17. Interacts with MCM3AP isoform MCM3AP; this interaction leads to MCM3 acetylation. Acetylated by MCM3AP. Post-translationally, O-glycosylated (O-GlcNAcylated), in a cell cycle-dependent manner.

The protein resides in the nucleus. Its subcellular location is the chromosome. It carries out the reaction ATP + H2O = ADP + phosphate + H(+). In terms of biological role, acts as a component of the MCM2-7 complex (MCM complex) which is the replicative helicase essential for 'once per cell cycle' DNA replication initiation and elongation in eukaryotic cells. Core component of CDC45-MCM-GINS (CMG) helicase, the molecular machine that unwinds template DNA during replication, and around which the replisome is built. The active ATPase sites in the MCM2-7 ring are formed through the interaction surfaces of two neighboring subunits such that a critical structure of a conserved arginine finger motif is provided in trans relative to the ATP-binding site of the Walker A box of the adjacent subunit. The six ATPase active sites, however, are likely to contribute differentially to the complex helicase activity. Required for the entry in S phase and for cell division. This is DNA replication licensing factor MCM3 (MCM3) from Bos taurus (Bovine).